The sequence spans 181 residues: Inner membrane-spanning protein YciB (181 aa).

5 helical membrane passes run 10-30 (LIIF…GALI), 50-70 (MQLI…ALHD), 80-100 (IVYV…KPAI), 120-140 (WAWV…AYHL), and 148-168 (FKVF…GGYI).

The protein belongs to the YciB family.

The protein localises to the cell inner membrane. Its function is as follows. Plays a role in cell envelope biogenesis, maintenance of cell envelope integrity and membrane homeostasis. The polypeptide is Inner membrane-spanning protein YciB (Vibrio cholerae serotype O1 (strain ATCC 39541 / Classical Ogawa 395 / O395)).